A 294-amino-acid chain; its full sequence is 4-hydroxy-tetrahydrodipicolinate synthase (294 aa).

Residue Thr47 participates in pyruvate binding. Catalysis depends on Tyr135, which acts as the Proton donor/acceptor. Lys164 functions as the Schiff-base intermediate with substrate in the catalytic mechanism. Residue Val206 participates in pyruvate binding.

The protein belongs to the DapA family. In terms of assembly, homotetramer; dimer of dimers.

Its subcellular location is the cytoplasm. It catalyses the reaction L-aspartate 4-semialdehyde + pyruvate = (2S,4S)-4-hydroxy-2,3,4,5-tetrahydrodipicolinate + H2O + H(+). It functions in the pathway amino-acid biosynthesis; L-lysine biosynthesis via DAP pathway; (S)-tetrahydrodipicolinate from L-aspartate: step 3/4. Its function is as follows. Catalyzes the condensation of (S)-aspartate-beta-semialdehyde [(S)-ASA] and pyruvate to 4-hydroxy-tetrahydrodipicolinate (HTPA). This is 4-hydroxy-tetrahydrodipicolinate synthase from Lachnoclostridium phytofermentans (strain ATCC 700394 / DSM 18823 / ISDg) (Clostridium phytofermentans).